The chain runs to 238 residues: Bacterial microcompartment shell protein PduB (238 aa).

2 BMC circularly permuted domains span residues 14–125 (FVGA…VYNA) and 126–225 (KAGH…LSQF). The cysteines at positions 158 and 197 are disulfide-linked.

It belongs to the EutL/PduB family. Homotrimerizes to form a pseudohexamer with a central pore 7.5 Angstroms wide and 22 Angstroms long; the pore channel in the crystal binds up to 4 glycerol molecules. A disulfide bond forms in the pore, it is not clear if this is an artifact. The trimers pack into an array.

The protein resides in the bacterial microcompartment. The protein operates within polyol metabolism; 1,2-propanediol degradation. Its function is as follows. One of the major shell proteins of the bacterial microcompartment (BMC) dedicated to 1,2-propanediol (1,2-PD) degradation. Probably involved in a propanediol fermentation/reuterin formation pathway. This Limosilactobacillus reuteri (strain DSM 20016) (Lactobacillus reuteri) protein is Bacterial microcompartment shell protein PduB.